The following is a 53-amino-acid chain: Sec-independent protein translocase protein TatA (53 aa).

Residues 1 to 21 (MGMSFSHLLIVLLIIFVLFGA) form a helical membrane-spanning segment.

The protein belongs to the TatA/E family. In terms of assembly, the Tat system comprises two distinct complexes: a TatABC complex, containing multiple copies of TatA, TatB and TatC subunits, and a separate TatA complex, containing only TatA subunits. Substrates initially bind to the TatABC complex, which probably triggers association of the separate TatA complex to form the active translocon.

The protein localises to the cell inner membrane. Part of the twin-arginine translocation (Tat) system that transports large folded proteins containing a characteristic twin-arginine motif in their signal peptide across membranes. TatA could form the protein-conducting channel of the Tat system. This chain is Sec-independent protein translocase protein TatA, found in Rickettsia rickettsii (strain Iowa).